The sequence spans 338 residues: MIRVAINGYGRIGRSILRALYESGKRQQIQIVAINELAKPEAIVHLTQYDTTHGRFQPRVKLVDDQMLIGDDVIKILHEPDPAKLPWHEMDIDIVYEATGAILDRNSCEAHIHAGAKQVLISHPSSADVDGTIVYGVNQDLLRAEHTVVSNASCTTNCIVPVIDVLDKHFGVKSGAITTIHSAMNDQQVIDAYHDDLRRTRAAGQSIIPVDTKLARGIERILPHMKDKFEAISVRVPTINVTAIDLSVTLDKTVDIATVNQVLELAANGRFNGILGYTDEPLVSCDFNHDPRSSIVDGTQTRVSAGQLVKLLLWCDNEWGFANRMLDTSLAMIAAKQS.

An NAD(+)-binding site is contributed by Arg-11–Ile-12. Substrate contacts are provided by residues Ser-153–Thr-155, Arg-199, Thr-212–Lys-213, and Arg-235. Residue Cys-154 is the Nucleophile of the active site. Asn-317 contacts NAD(+).

It belongs to the glyceraldehyde-3-phosphate dehydrogenase family. Epd subfamily. As to quaternary structure, homotetramer.

The protein localises to the cytoplasm. The enzyme catalyses D-erythrose 4-phosphate + NAD(+) + H2O = 4-phospho-D-erythronate + NADH + 2 H(+). The protein operates within cofactor biosynthesis; pyridoxine 5'-phosphate biosynthesis; pyridoxine 5'-phosphate from D-erythrose 4-phosphate: step 1/5. Functionally, catalyzes the NAD-dependent conversion of D-erythrose 4-phosphate to 4-phosphoerythronate. The chain is D-erythrose-4-phosphate dehydrogenase from Shewanella sp. (strain MR-4).